A 292-amino-acid chain; its full sequence is D-alanyl-D-alanine endopeptidase (292 aa).

The first 18 residues, 1–18 (MFKKALFILSLCPSFALA), serve as a signal peptide directing secretion. S45 (acyl-ester intermediate) is an active-site residue. Catalysis depends on K48, which acts as the Proton acceptor. S102 is an active-site residue. K207 contacts substrate.

Belongs to the peptidase S11 family.

It localises to the periplasm. Its function is as follows. Cell wall formation. May play a specialized role in remodeling the cell wall. Specifically hydrolyzes the DD-diaminopimelate-alanine bonds in high-molecular-mass murein sacculi. In Haemophilus influenzae (strain ATCC 51907 / DSM 11121 / KW20 / Rd), this protein is D-alanyl-D-alanine endopeptidase (pbpG).